A 129-amino-acid polypeptide reads, in one-letter code: Short-chain dehydrogenase/reductase homolog YusR (129 aa).

This sequence belongs to the short-chain dehydrogenases/reductases (SDR) family.

This Bacillus subtilis (strain 168) protein is Short-chain dehydrogenase/reductase homolog YusR (yusR).